The primary structure comprises 127 residues: Serum amyloid A protein (127 aa).

The first 18 residues, 1 to 18 (MKLLTSLFLLSLVLCVNS), serve as a signal peptide directing secretion. Pyrrolidone carboxylic acid is present on glutamine 19. The tract at residues 89–127 (GGSSGRGVEDSMADQEANRWGRSGKDPNRYRPKGLDPKY) is disordered. Positions 104–127 (EANRWGRSGKDPNRYRPKGLDPKY) are enriched in basic and acidic residues.

The protein belongs to the SAA family. In terms of tissue distribution, expressed by the liver; secreted in plasma.

It is found in the secreted. Major acute phase reactant. Apolipoprotein of the HDL complex. The polypeptide is Serum amyloid A protein (SAA1) (Notamacropus eugenii (Tammar wallaby)).